A 100-amino-acid chain; its full sequence is Nucleoid-associated protein ckrop_0143 (100 aa).

The protein belongs to the YbaB/EbfC family. As to quaternary structure, homodimer.

The protein localises to the cytoplasm. It localises to the nucleoid. Functionally, binds to DNA and alters its conformation. May be involved in regulation of gene expression, nucleoid organization and DNA protection. The polypeptide is Nucleoid-associated protein ckrop_0143 (Corynebacterium kroppenstedtii (strain DSM 44385 / JCM 11950 / CIP 105744 / CCUG 35717)).